The following is a 136-amino-acid chain: Cytochrome c-550 (136 aa).

Positions 1 to 28 (MTKLTFGALVALAMTAAASTAMSSKAMA) are cleaved as a signal peptide. C41, C44, H45, and M107 together coordinate heme c.

Binds 1 heme c group covalently per subunit. Post-translationally, the N-terminus is blocked.

It is found in the periplasm. In terms of biological role, plays a role in bacteroid respiration under conditions of oxygen limitation. Required for electron-transfer during denitrification. The sequence is that of Cytochrome c-550 (cycA) from Bradyrhizobium diazoefficiens (strain JCM 10833 / BCRC 13528 / IAM 13628 / NBRC 14792 / USDA 110).